We begin with the raw amino-acid sequence, 473 residues long: 3-isopropylmalate dehydratase large subunit 2 (473 aa).

[4Fe-4S] cluster-binding residues include C350, C410, and C413.

It belongs to the aconitase/IPM isomerase family. LeuC type 1 subfamily. Heterodimer of LeuC and LeuD. [4Fe-4S] cluster is required as a cofactor.

It catalyses the reaction (2R,3S)-3-isopropylmalate = (2S)-2-isopropylmalate. The protein operates within amino-acid biosynthesis; L-leucine biosynthesis; L-leucine from 3-methyl-2-oxobutanoate: step 2/4. Functionally, catalyzes the isomerization between 2-isopropylmalate and 3-isopropylmalate, via the formation of 2-isopropylmaleate. In Salmonella typhimurium (strain LT2 / SGSC1412 / ATCC 700720), this protein is 3-isopropylmalate dehydratase large subunit 2.